The primary structure comprises 635 residues: UvrABC system protein C (635 aa).

The span at 1–14 (MAQNHMSETMNDIS) shows a compositional bias: polar residues. The tract at residues 1–27 (MAQNHMSETMNDISAESPDQPEPPRTG) is disordered. Residues 40-117 (SSPGVYRMLD…IKQLKPKYNV (78 aa)) enclose the GIY-YIG domain. Positions 227-262 (TKIQEELGAEMQAASEAMEYERAAALRDRIKALTQV) constitute a UVR domain.

The protein belongs to the UvrC family. As to quaternary structure, interacts with UvrB in an incision complex.

The protein resides in the cytoplasm. Functionally, the UvrABC repair system catalyzes the recognition and processing of DNA lesions. UvrC both incises the 5' and 3' sides of the lesion. The N-terminal half is responsible for the 3' incision and the C-terminal half is responsible for the 5' incision. The chain is UvrABC system protein C from Ruegeria sp. (strain TM1040) (Silicibacter sp.).